The chain runs to 309 residues: Ornithine carbamoyltransferase (309 aa).

Carbamoyl phosphate-binding positions include 51–54, Gln-78, Arg-102, and 129–132; these read STRT and HPVQ. L-ornithine-binding positions include Asn-160, Asp-224, and 228-229; that span reads SM. Carbamoyl phosphate is bound by residues 264 to 265 and Arg-292; that span reads CL.

The protein belongs to the aspartate/ornithine carbamoyltransferase superfamily. OTCase family.

It localises to the cytoplasm. It catalyses the reaction carbamoyl phosphate + L-ornithine = L-citrulline + phosphate + H(+). It functions in the pathway amino-acid biosynthesis; L-arginine biosynthesis; L-arginine from L-ornithine and carbamoyl phosphate: step 1/3. Its function is as follows. Reversibly catalyzes the transfer of the carbamoyl group from carbamoyl phosphate (CP) to the N(epsilon) atom of ornithine (ORN) to produce L-citrulline. The protein is Ornithine carbamoyltransferase of Campylobacter fetus subsp. fetus (strain 82-40).